The chain runs to 75 residues: Tetrahydromethanopterin S-methyltransferase subunit F (75 aa).

Residues 53–73 (FAGLACGMVFAGVLLVPLLLL) traverse the membrane as a helical segment.

It belongs to the MtrF family. The complex is composed of 8 subunits; MtrA, MtrB, MtrC, MtrD, MtrE, MtrF, MtrG and MtrH.

Its subcellular location is the cell membrane. It carries out the reaction 5-methyl-5,6,7,8-tetrahydromethanopterin + coenzyme M + 2 Na(+)(in) = 5,6,7,8-tetrahydromethanopterin + methyl-coenzyme M + 2 Na(+)(out). Its pathway is one-carbon metabolism; methanogenesis from CO(2); methyl-coenzyme M from 5,10-methylene-5,6,7,8-tetrahydromethanopterin: step 2/2. Functionally, part of a complex that catalyzes the formation of methyl-coenzyme M and tetrahydromethanopterin from coenzyme M and methyl-tetrahydromethanopterin. This is an energy-conserving, sodium-ion translocating step. This Methanopyrus kandleri (strain AV19 / DSM 6324 / JCM 9639 / NBRC 100938) protein is Tetrahydromethanopterin S-methyltransferase subunit F.